Reading from the N-terminus, the 173-residue chain is MNQTKSRDIPLYIYHAGQCDPKKCTGRKMARFELARLYDRISRLPRSAILLDPMAEKALSPADDPKKGIIVLDCSWEEVERVFPELEKLNLEHRALPYMLAGNPVNFGRPFKLNSAEAFAAALYILGYKEQAEKVMSKFNWGHSFLELNREPLEEYSTAKNSTEIVEIQSHYI.

Residues T25, L72, L96, and S115 each coordinate S-adenosyl-L-methionine.

The protein belongs to the TDD superfamily. TSR3 family.

It is found in the cytoplasm. The enzyme catalyses an N(1)-methylpseudouridine in rRNA + S-adenosyl-L-methionine = N(1)-methyl-N(3)-[(3S)-3-amino-3-carboxypropyl]pseudouridine in rRNA + S-methyl-5'-thioadenosine + H(+). In terms of biological role, aminocarboxypropyltransferase that catalyzes the aminocarboxypropyl transfer on pseudouridine corresponding to position 914 in M.jannaschii 16S rRNA. It constitutes the last step in biosynthesis of the hypermodified N1-methyl-N3-(3-amino-3-carboxypropyl) pseudouridine (m1acp3-Psi). The polypeptide is 16S rRNA aminocarboxypropyltransferase (Methanosarcina mazei (strain ATCC BAA-159 / DSM 3647 / Goe1 / Go1 / JCM 11833 / OCM 88) (Methanosarcina frisia)).